Consider the following 87-residue polypeptide: Small ribosomal subunit protein bS20 (87 aa).

Residues 1-11 (MANIKSAKKRA) show a composition bias toward basic residues. The tract at residues 1 to 27 (MANIKSAKKRAVQSEKRRQHNASQRSM) is disordered.

Belongs to the bacterial ribosomal protein bS20 family.

Binds directly to 16S ribosomal RNA. This Haemophilus influenzae (strain PittEE) protein is Small ribosomal subunit protein bS20.